Here is a 509-residue protein sequence, read N- to C-terminus: ATP synthase subunit alpha (509 aa).

169–176 contacts ATP; sequence GDRQTGKT.

This sequence belongs to the ATPase alpha/beta chains family. As to quaternary structure, F-type ATPases have 2 components, CF(1) - the catalytic core - and CF(0) - the membrane proton channel. CF(1) has five subunits: alpha(3), beta(3), gamma(1), delta(1), epsilon(1). CF(0) has four main subunits: a(1), b(1), b'(1) and c(9-12).

It localises to the cell inner membrane. The enzyme catalyses ATP + H2O + 4 H(+)(in) = ADP + phosphate + 5 H(+)(out). Functionally, produces ATP from ADP in the presence of a proton gradient across the membrane. The alpha chain is a regulatory subunit. In Bradyrhizobium sp. (strain BTAi1 / ATCC BAA-1182), this protein is ATP synthase subunit alpha.